The sequence spans 298 residues: ADP/ATP translocase 1 (298 aa).

Residues 1–7 lie on the Mitochondrial intermembrane side of the membrane; sequence MSDQALS. Serine 2 is modified (N-acetylserine). Residues 6 to 98 form a Solcar 1 repeat; that stretch reads LSFLKDFLAG…FAFKDKYKQI (93 aa). Serine 7 carries the post-translational modification Phosphoserine. Residues 8-37 traverse the membrane as a helical segment; that stretch reads FLKDFLAGGVAAAVSKTAVAPIERVKLLLQ. The Mitochondrial matrix portion of the chain corresponds to 38-74; sequence VQHASKQISAEKQYKGIIDCVVRIPKEQGFLSFWRGN. At lysine 52 the chain carries N6,N6,N6-trimethyllysine. A helical transmembrane segment spans residues 75 to 99; that stretch reads LANVIRYFPTQALNFAFKDKYKQIF. 2 residues coordinate ADP: arginine 80 and lysine 92. Residues 100-109 lie on the Mitochondrial intermembrane side of the membrane; it reads LGGVDRHKQF. Residues 110–130 form a helical membrane-spanning segment; the sequence is WRYFAGNLASGGAAGATSLCF. 2 Solcar repeats span residues 111–201 and 212–297; these read RYFA…AKGM and VSWM…IKKY. Residues 131–178 are Mitochondrial matrix-facing; it reads VYPLDFARTRLAADVGKGAAQREFSGLGNCLTKIFKSDGLRGLYQGFN. Lysine 147 carries the post-translational modification N6-succinyllysine. Residue cysteine 160 is modified to S-nitrosocysteine. A helical membrane pass occupies residues 179-199; that stretch reads VSVQGIIIYRAAYFGVYDTAK. Residues 200–210 lie on the Mitochondrial intermembrane side of the membrane; sequence GMLPDPKNVHI. Residues 211 to 231 traverse the membrane as a helical segment; sequence IVSWMIAQTVTAVAGLVSYPF. Topologically, residues 232 to 273 are mitochondrial matrix; the sequence is DTVRRRMMMQSGRKGADIMYTGTVDCWKKIAKDEGAKAFFKG. ADP is bound at residue arginine 235. The important for transport activity stretch occupies residues 235-240; sequence RRRMMM. A Nucleotide carrier signature motif motif is present at residues 235-240; sequence RRRMMM. Residues lysine 245 and lysine 272 each carry the N6-succinyllysine modification. Residues 274–291 traverse the membrane as a helical segment; that stretch reads AWSNVLRGMGGAFVLVLY. Over 292-298 the chain is Mitochondrial intermembrane; that stretch reads DEIKKYV.

This sequence belongs to the mitochondrial carrier (TC 2.A.29) family. In terms of assembly, monomer. Found in a complex with ARL2, ARL2BP and SLC25A4/ANT1. Interacts with ARL2BP. Interacts with TIMM44; leading to inhibit the presequence translocase TIMM23, thereby promoting stabilization of PINK1. In terms of processing, under cell death induction, transglutaminated by TGM2. Transglutamination leads to formation of covalent cross-links between a glutamine and the epsilon-amino group of a lysine residue, forming polymers.

The protein localises to the mitochondrion inner membrane. It localises to the membrane. The catalysed reaction is ADP(in) + ATP(out) = ADP(out) + ATP(in). It carries out the reaction H(+)(in) = H(+)(out). With respect to regulation, the matrix-open state (m-state) is inhibited by the membrane-permeable bongkrekic acid (BKA). The cytoplasmic-open state (c-state) is inhibited by the membrane-impermeable toxic inhibitor carboxyatractyloside (CATR). Proton transporter activity is inhibited by ADP:ATP antiporter activity. ADP:ATP antiporter that mediates import of ADP into the mitochondrial matrix for ATP synthesis, and export of ATP out to fuel the cell. Cycles between the cytoplasmic-open state (c-state) and the matrix-open state (m-state): operates by the alternating access mechanism with a single substrate-binding site intermittently exposed to either the cytosolic (c-state) or matrix (m-state) side of the inner mitochondrial membrane. In addition to its ADP:ATP antiporter activity, also involved in mitochondrial uncoupling and mitochondrial permeability transition pore (mPTP) activity. Plays a role in mitochondrial uncoupling by acting as a proton transporter: proton transport uncouples the proton flows via the electron transport chain and ATP synthase to reduce the efficiency of ATP production and cause mitochondrial thermogenesis. Proton transporter activity is inhibited by ADP:ATP antiporter activity, suggesting that SLC25A4/ANT1 acts as a master regulator of mitochondrial energy output by maintaining a delicate balance between ATP production (ADP:ATP antiporter activity) and thermogenesis (proton transporter activity). Proton transporter activity requires free fatty acids as cofactor, but does not transport it. Probably mediates mitochondrial uncoupling in tissues that do not express UCP1. Also plays a key role in mPTP opening, a non-specific pore that enables free passage of the mitochondrial membranes to solutes of up to 1.5 kDa, and which contributes to cell death. It is however unclear if SLC25A4/ANT1 constitutes a pore-forming component of mPTP or regulates it. Acts as a regulator of mitophagy independently of ADP:ATP antiporter activity: promotes mitophagy via interaction with TIMM44, leading to inhibit the presequence translocase TIMM23, thereby promoting stabilization of PINK1. This chain is ADP/ATP translocase 1, found in Oryctolagus cuniculus (Rabbit).